Consider the following 921-residue polypeptide: Protein translocase subunit SecA (921 aa).

ATP-binding positions include Q87, 105 to 109 (GEGKT), and D515. Residues 575 to 594 (RRIDNQLRGRSGRQGDPGSS) form a disordered region. Positions 905, 907, 916, and 917 each coordinate Zn(2+).

Belongs to the SecA family. As to quaternary structure, monomer and homodimer. Part of the essential Sec protein translocation apparatus which comprises SecA, SecYEG and auxiliary proteins SecDF-YajC and YidC. It depends on Zn(2+) as a cofactor.

The protein localises to the cell inner membrane. It is found in the cytoplasm. It carries out the reaction ATP + H2O + cellular proteinSide 1 = ADP + phosphate + cellular proteinSide 2.. Functionally, part of the Sec protein translocase complex. Interacts with the SecYEG preprotein conducting channel. Has a central role in coupling the hydrolysis of ATP to the transfer of proteins into and across the cell membrane, serving both as a receptor for the preprotein-SecB complex and as an ATP-driven molecular motor driving the stepwise translocation of polypeptide chains across the membrane. The protein is Protein translocase subunit SecA of Polynucleobacter necessarius subsp. necessarius (strain STIR1).